The primary structure comprises 190 residues: MSVPADTSPAKGPVIAVVGPSGVGKDSLMSGLAVADPRLRSMRRVITRAPEAGGEDYQPVSEAEFQALVEADVFALHWNAHGLRYGIPRDIEKLREGATGVLVNLSRAVLLQAQEVFDDFRVISVTARPEVLAARLAGRGREDAAEVERRLARASLALPEGLRQVHEVDNSGALSAAIVEAQAIIQAERA.

Position 19–26 (19–26 (GPSGVGKD)) interacts with ATP.

The protein belongs to the ribose 1,5-bisphosphokinase family.

The enzyme catalyses alpha-D-ribose 1,5-bisphosphate + ATP = 5-phospho-alpha-D-ribose 1-diphosphate + ADP. The protein operates within metabolic intermediate biosynthesis; 5-phospho-alpha-D-ribose 1-diphosphate biosynthesis; 5-phospho-alpha-D-ribose 1-diphosphate from D-ribose 5-phosphate (route II): step 3/3. In terms of biological role, catalyzes the phosphorylation of ribose 1,5-bisphosphate to 5-phospho-D-ribosyl alpha-1-diphosphate (PRPP). This is Ribose 1,5-bisphosphate phosphokinase PhnN from Ruegeria sp. (strain TM1040) (Silicibacter sp.).